The sequence spans 775 residues: uncharacterized protein (775 aa).

5 consecutive transmembrane segments (helical) span residues 16–36 (KLLI…GVFL), 585–605 (PYIL…VFPL), 625–645 (VMML…LLGI), 655–675 (FYVF…FLAT), and 742–762 (GVLI…FTML).

The protein to L.lactis phage infection protein (PIP).

The protein localises to the cell membrane. This is an uncharacterized protein from Bacillus subtilis (strain 168).